Reading from the N-terminus, the 422-residue chain is Enolase (422 aa).

Gln162 serves as a coordination point for (2R)-2-phosphoglycerate. Glu204 serves as the catalytic Proton donor. Mg(2+)-binding residues include Asp241, Glu284, and Asp311. Lys336, Arg365, Ser366, and Lys387 together coordinate (2R)-2-phosphoglycerate. Lys336 serves as the catalytic Proton acceptor.

The protein belongs to the enolase family. Mg(2+) serves as cofactor.

It localises to the cytoplasm. Its subcellular location is the secreted. It is found in the cell surface. It carries out the reaction (2R)-2-phosphoglycerate = phosphoenolpyruvate + H2O. It functions in the pathway carbohydrate degradation; glycolysis; pyruvate from D-glyceraldehyde 3-phosphate: step 4/5. In terms of biological role, catalyzes the reversible conversion of 2-phosphoglycerate (2-PG) into phosphoenolpyruvate (PEP). It is essential for the degradation of carbohydrates via glycolysis. The protein is Enolase of Thermus thermophilus (strain ATCC 27634 / DSM 579 / HB8).